The chain runs to 198 residues: uncharacterized protein (198 aa).

This is an uncharacterized protein from Bacillus subtilis (strain 168).